Here is a 337-residue protein sequence, read N- to C-terminus: uncharacterized protein (337 aa).

A compositionally biased stretch (low complexity) spans 42-66 (SHSVSPSPSPSDFSSSSSSSSSSPS). The segment at 42-68 (SHSVSPSPSPSDFSSSSSSSSSSPSTF) is disordered. Residues 129–304 (FLVIDLEGKV…DDTKNITRVV (176 aa)) form the Exonuclease domain. 3 residues coordinate Mg(2+): Asp-133, Glu-135, and Asp-234. The active-site Proton acceptor is Glu-135. Glu-135 serves as a coordination point for AMP. His-291 (proton acceptor) is an active-site residue. AMP is bound at residue His-291. Asp-296 lines the Mg(2+) pocket.

This is an uncharacterized protein from Arabidopsis thaliana (Mouse-ear cress).